The following is a 258-amino-acid chain: Hydroxypyruvate isomerase (258 aa).

Residues E143 and E240 each act as proton donor/acceptor in the active site.

The protein belongs to the hyi family. In terms of assembly, homodimer.

It carries out the reaction 3-hydroxypyruvate = 2-hydroxy-3-oxopropanoate. Not stimulated by addition of pyridoxal 5'-phosphate (0.1 mM), FAD, NAD(+), NADP(+) or ATP (1 mM each). EDTA (10 mM) and metal ions (1 mM) such as Ca(2+), Co(2+), Mg(2+), Ni(2+), Zn(2+) do not affect the enzyme activity. Functionally, catalyzes the reversible isomerization between hydroxypyruvate and 2-hydroxy-3-oxopropanoate (also termed tartronate semialdehyde). Does not catalyze the isomerization of D-fructose to D-glucose or that of D-xylulose to D-xylose. Also does not catalyze racemization of serine, alanine, glycerate or lactate. The sequence is that of Hydroxypyruvate isomerase (hyi) from Escherichia coli (strain K12).